The chain runs to 346 residues: Biotin synthase (346 aa).

The Radical SAM core domain maps to 38–256 (RQVQVSTLLS…IAVARIMMPT (219 aa)). [4Fe-4S] cluster is bound by residues Cys-53, Cys-57, and Cys-60. Positions 97, 128, 188, and 260 each coordinate [2Fe-2S] cluster.

The protein belongs to the radical SAM superfamily. Biotin synthase family. Homodimer. [4Fe-4S] cluster is required as a cofactor. Requires [2Fe-2S] cluster as cofactor.

It catalyses the reaction (4R,5S)-dethiobiotin + (sulfur carrier)-SH + 2 reduced [2Fe-2S]-[ferredoxin] + 2 S-adenosyl-L-methionine = (sulfur carrier)-H + biotin + 2 5'-deoxyadenosine + 2 L-methionine + 2 oxidized [2Fe-2S]-[ferredoxin]. It participates in cofactor biosynthesis; biotin biosynthesis; biotin from 7,8-diaminononanoate: step 2/2. Functionally, catalyzes the conversion of dethiobiotin (DTB) to biotin by the insertion of a sulfur atom into dethiobiotin via a radical-based mechanism. The polypeptide is Biotin synthase (Escherichia coli O6:H1 (strain CFT073 / ATCC 700928 / UPEC)).